We begin with the raw amino-acid sequence, 107 residues long: Putidaredoxin (107 aa).

Positions 2–106 constitute a 2Fe-2S ferredoxin-type domain; the sequence is SKVVYVSHDG…GIVVDVPDRQ (105 aa). [2Fe-2S] cluster is bound by residues Cys40, Cys46, Cys49, and Cys87.

Belongs to the adrenodoxin/putidaredoxin family. As to quaternary structure, monomer. [2Fe-2S] cluster serves as cofactor.

Its function is as follows. The oxidation of camphor by cytochrome P450-CAM requires the participation of a flavoprotein, putidaredoxin reductase, and an iron-sulfur protein, putidaredoxin, to mediate the transfer of electrons from NADH to P450 for oxygen activation. The chain is Putidaredoxin (camB) from Pseudomonas putida (Arthrobacter siderocapsulatus).